Reading from the N-terminus, the 142-residue chain is MVLSPADKSNVKAAWGKVGGHAGDYGAEALERMFLSFPTTKTYFPHFDLSHGSAQVKGHGKKVADALTNAVAHVDDMPNALSALSDLHAHKLRVDPVNFKLLSHCLLVTLAAHHPADFTPAVHASLDKFLASVSTVLTSKYR.

Residues 2 to 142 form the Globin domain; sequence VLSPADKSNV…VSTVLTSKYR (141 aa). Residue S4 is modified to Phosphoserine. An N6-succinyllysine mark is found at K8 and K12. An N6-acetyllysine; alternate modification is found at K17. Residue K17 is modified to N6-succinyllysine; alternate. A Phosphotyrosine modification is found at Y25. The residue at position 36 (S36) is a Phosphoserine. At K41 the chain carries N6-succinyllysine. Position 50 is a phosphoserine (S50). H59 provides a ligand contact to O2. H88 serves as a coordination point for heme b. Position 103 is a phosphoserine (S103). At T109 the chain carries Phosphothreonine. S125 and S132 each carry phosphoserine. Residues T135 and T138 each carry the phosphothreonine modification. Position 139 is a phosphoserine (S139).

The protein belongs to the globin family. In terms of assembly, heterotetramer of two alpha chains and two beta chains. Red blood cells.

Its function is as follows. Involved in oxygen transport from the lung to the various peripheral tissues. Functionally, hemopressin acts as an antagonist peptide of the cannabinoid receptor CNR1. Hemopressin-binding efficiently blocks cannabinoid receptor CNR1 and subsequent signaling. In Ateles geoffroyi (Black-handed spider monkey), this protein is Hemoglobin subunit alpha (HBA).